The chain runs to 254 residues: Ankyrin repeat domain-containing protein 7 (254 aa).

ANK repeat units follow at residues 58-87 (KYRT…KINV), 91-120 (ENKS…DPDL), 124-153 (RYNT…DLEA), 157-186 (DGYT…DVNA), and 190-219 (YQRT…ELCY).

In terms of tissue distribution, testis specific.

In Homo sapiens (Human), this protein is Ankyrin repeat domain-containing protein 7 (ANKRD7).